Reading from the N-terminus, the 530-residue chain is 3-oxo-5-alpha-steroid 4-dehydrogenase (530 aa).

33-62 lines the FAD pocket; the sequence is DVVVVGWGGAGASAAIEAREQGAEVLVIER. Residues 395–415 form a helical membrane-spanning segment; it reads AWQCLFGGLWAFQSMPALALM.

This sequence belongs to the FAD-dependent oxidoreductase 2 family. FAD is required as a cofactor.

It is found in the membrane. It carries out the reaction a 3-oxo-5alpha-steroid + A = a 3-oxo-Delta(4)-steroid + AH2. The enzyme catalyses 5alpha-androstan-3,17-dione + A = androst-4-ene-3,17-dione + AH2. It catalyses the reaction 5alpha-androst-1-ene-3,17-dione + A = androsta-1,4-diene-3,17-dione + AH2. With respect to regulation, inhibition occurs with substrate concentrations above 25 uM. In terms of biological role, involved in the degradation of steroids having an A:B ring fusion in a trans configuration. Catalyzes the elimination of hydrogens located at positions 4 and 5 and the introduction of double bonds into ring A. This chain is 3-oxo-5-alpha-steroid 4-dehydrogenase, found in Comamonas testosteroni (Pseudomonas testosteroni).